Consider the following 119-residue polypeptide: Phosphoribosyl-AMP cyclohydrolase (119 aa).

Aspartate 77 is a binding site for Mg(2+). Position 78 (cysteine 78) interacts with Zn(2+). Positions 79 and 81 each coordinate Mg(2+). Zn(2+)-binding residues include cysteine 94 and cysteine 101.

This sequence belongs to the PRA-CH family. As to quaternary structure, homodimer. It depends on Mg(2+) as a cofactor. Zn(2+) serves as cofactor.

Its subcellular location is the cytoplasm. It catalyses the reaction 1-(5-phospho-beta-D-ribosyl)-5'-AMP + H2O = 1-(5-phospho-beta-D-ribosyl)-5-[(5-phospho-beta-D-ribosylamino)methylideneamino]imidazole-4-carboxamide. It functions in the pathway amino-acid biosynthesis; L-histidine biosynthesis; L-histidine from 5-phospho-alpha-D-ribose 1-diphosphate: step 3/9. Catalyzes the hydrolysis of the adenine ring of phosphoribosyl-AMP. The protein is Phosphoribosyl-AMP cyclohydrolase of Cereibacter sphaeroides (strain KD131 / KCTC 12085) (Rhodobacter sphaeroides).